A 245-amino-acid polypeptide reads, in one-letter code: Orotidine 5'-phosphate decarboxylase (245 aa).

Substrate-binding positions include aspartate 22, lysine 44, 71–80 (DLKFHDIPNT), threonine 131, arginine 192, glutamine 201, glycine 221, and arginine 222. Residue lysine 73 is the Proton donor of the active site.

Belongs to the OMP decarboxylase family. Type 1 subfamily. In terms of assembly, homodimer.

It carries out the reaction orotidine 5'-phosphate + H(+) = UMP + CO2. Its pathway is pyrimidine metabolism; UMP biosynthesis via de novo pathway; UMP from orotate: step 2/2. In terms of biological role, catalyzes the decarboxylation of orotidine 5'-monophosphate (OMP) to uridine 5'-monophosphate (UMP). The protein is Orotidine 5'-phosphate decarboxylase of Yersinia pseudotuberculosis serotype O:3 (strain YPIII).